The following is a 288-amino-acid chain: N-glycosylase/DNA lyase (288 aa).

The 8-oxoguanine site is built by glutamine 35, serine 62, and tryptophan 73. A helix-hairpin-helix region spans residues 134-203 (NPLVLVERPS…VACASISSEM (70 aa)). The active-site Schiff-base intermediate with DNA is lysine 160. Positions 164 and 189 each coordinate 8-oxoguanine. Aspartate 191 is an active-site residue. Residues aspartate 238 and tryptophan 242 each contribute to the 8-oxoguanine site.

Belongs to the archaeal N-glycosylase/DNA lyase (AGOG) family.

It catalyses the reaction 2'-deoxyribonucleotide-(2'-deoxyribose 5'-phosphate)-2'-deoxyribonucleotide-DNA = a 3'-end 2'-deoxyribonucleotide-(2,3-dehydro-2,3-deoxyribose 5'-phosphate)-DNA + a 5'-end 5'-phospho-2'-deoxyribonucleoside-DNA + H(+). In terms of biological role, DNA repair enzyme that is part of the base excision repair (BER) pathway; protects from oxidative damage by removing the major product of DNA oxidation, 8-oxoguanine (GO), from single- and double-stranded DNA substrates. This is N-glycosylase/DNA lyase from Aeropyrum pernix (strain ATCC 700893 / DSM 11879 / JCM 9820 / NBRC 100138 / K1).